A 721-amino-acid polypeptide reads, in one-letter code: Quinolinate synthase, chloroplastic (721 aa).

The N-terminal 67 residues, 1–67 (MDAANLVMKS…KIPSNNSTFT (67 aa)), are a transit peptide targeting the chloroplast. Catalysis depends on Cys133, which acts as the Cysteine persulfide intermediate. Positions 283 and 309 each coordinate iminosuccinate. Position 363 (Cys363) interacts with [4Fe-4S] cluster. Iminosuccinate-binding positions include 392 to 394 (YIN) and Ser414. Residue Cys487 participates in [4Fe-4S] cluster binding. Iminosuccinate contacts are provided by residues 513 to 515 (HFE) and Thr538. Cys643 contacts [4Fe-4S] cluster.

It belongs to the quinolinate synthase family. Type 1 subfamily. As to quaternary structure, homodimer. [4Fe-4S] cluster is required as a cofactor.

It localises to the plastid. Its subcellular location is the chloroplast. The enzyme catalyses iminosuccinate + dihydroxyacetone phosphate = quinolinate + phosphate + 2 H2O + H(+). The protein operates within alkaloid biosynthesis; nicotine biosynthesis. It participates in cofactor biosynthesis; NAD(+) biosynthesis; quinolinate from iminoaspartate: step 1/1. Functionally, involved in the biosynthesis of pyridine alkaloid natural products, leading mainly to the production of anabasine, anatabine, nicotine and nornicotine, effective deterrents against herbivores with antiparasitic and pesticide properties (neurotoxins); nornicotine serves as the precursor in the synthesis of the carcinogen compound N'-nitrosonornicotine (NNN). Catalyzes the condensation of iminoaspartate with dihydroxyacetone phosphate to form quinolinate. The chain is Quinolinate synthase, chloroplastic from Nicotiana tabacum (Common tobacco).